A 234-amino-acid polypeptide reads, in one-letter code: Ribose-5-phosphate isomerase A (234 aa).

Substrate-binding positions include threonine 28–threonine 31, aspartate 83–aspartate 86, and lysine 96–glycine 99. The active-site Proton acceptor is glutamate 105. Position 123 (lysine 123) interacts with substrate.

The protein belongs to the ribose 5-phosphate isomerase family. Homodimer.

It catalyses the reaction aldehydo-D-ribose 5-phosphate = D-ribulose 5-phosphate. The protein operates within carbohydrate degradation; pentose phosphate pathway; D-ribose 5-phosphate from D-ribulose 5-phosphate (non-oxidative stage): step 1/1. In terms of biological role, catalyzes the reversible conversion of ribose-5-phosphate to ribulose 5-phosphate. In Bartonella quintana (strain Toulouse) (Rochalimaea quintana), this protein is Ribose-5-phosphate isomerase A.